Here is a 512-residue protein sequence, read N- to C-terminus: Maturase K (512 aa).

It belongs to the intron maturase 2 family. MatK subfamily.

The protein localises to the plastid. Its subcellular location is the chloroplast. Usually encoded in the trnK tRNA gene intron. Probably assists in splicing its own and other chloroplast group II introns. The protein is Maturase K of Erythranthe guttata (Yellow monkey flower).